The following is a 527-amino-acid chain: Probable malate:quinone oxidoreductase (527 aa).

Belongs to the MQO family. It depends on FAD as a cofactor.

The enzyme catalyses (S)-malate + a quinone = a quinol + oxaloacetate. It participates in carbohydrate metabolism; tricarboxylic acid cycle; oxaloacetate from (S)-malate (quinone route): step 1/1. The protein is Probable malate:quinone oxidoreductase of Pectobacterium carotovorum subsp. carotovorum (strain PC1).